The chain runs to 288 residues: Prohibitin-2 (288 aa).

A helical; Signal-anchor for type II membrane protein transmembrane segment spans residues Gly-21–Thr-43. Residues Tyr-125–Leu-128 carry the AIM motif.

It belongs to the prohibitin family. As to quaternary structure, the mitochondrial prohibitin complex consists of two subunits (phb1 and phb2). The subunits assemble into a membrane-associated ring-shaped supercomplex of approximately 1 mDa.

Its subcellular location is the mitochondrion inner membrane. Its function is as follows. Prohibitin probably acts as a holdase/unfoldase for the stabilization of newly synthesized mitochondrial proteins. Involved in mitophagy; may act as an adapter for atg8 that supports mitophagosome assembly. Negatively regulates the proteolytic processing of atg32 via the i-AAA protease. Acts as a negative regulator of the m-AAA protease. The polypeptide is Prohibitin-2 (phb2) (Schizosaccharomyces pombe (strain 972 / ATCC 24843) (Fission yeast)).